Reading from the N-terminus, the 894-residue chain is Translation factor GUF1 homolog, mitochondrial (894 aa).

The disordered stretch occupies residues 157–189 (EDEGLDGGPPPGMEAKKSSSSSSSNNVHSNCSD). Residues 174–188 (SSSSSSSNNVHSNCS) are compositionally biased toward low complexity. Residues 199–376 (ENIRNFCILA…RIVSEIPSPA (178 aa)) form the tr-type G domain. Residues 208-215 (AHIDSGKS), 269-273 (DTPGH), and 323-326 (NKID) each bind GTP. Residues 649-674 (DHDDCNDNGGSNSDDRSDRSGKNPPD) are disordered.

Belongs to the TRAFAC class translation factor GTPase superfamily. Classic translation factor GTPase family. LepA subfamily.

The protein localises to the mitochondrion inner membrane. It catalyses the reaction GTP + H2O = GDP + phosphate + H(+). In terms of biological role, promotes mitochondrial protein synthesis. May act as a fidelity factor of the translation reaction, by catalyzing a one-codon backward translocation of tRNAs on improperly translocated ribosomes. Binds to mitochondrial ribosomes in a GTP-dependent manner. This is Translation factor GUF1 homolog, mitochondrial from Plasmodium knowlesi (strain H).